Consider the following 193-residue polypeptide: MYKKIIFSEFNSASKILKNFLEDKKQIENIQKAAILIAQSFKNEKKVISCGNGGSHCDAVHFSEELTSVYRKKRSGYPAISISDSSYISAVGNDFGYDQIFSRFIQSVGHLGDILLAISTSGNSLNIVRAIEEAKKKKMKVIVLTGNNAGKIKNLSDIEICIPHCGYSDRIQEMHIKIIHILILIIEKEMQKN.

An SIS domain is found at 37–193 (IAQSFKNEKK…LIIEKEMQKN (157 aa)). 52-54 (NGG) serves as a coordination point for substrate. Zn(2+) is bound by residues His61 and Glu65. Residues Glu65, 93–94 (ND), 119–121 (STS), Ser124, and Gln172 each bind substrate. 2 residues coordinate Zn(2+): Gln172 and His180.

It belongs to the SIS family. GmhA subfamily. As to quaternary structure, homotetramer. Zn(2+) serves as cofactor.

It is found in the cytoplasm. The enzyme catalyses 2 D-sedoheptulose 7-phosphate = D-glycero-alpha-D-manno-heptose 7-phosphate + D-glycero-beta-D-manno-heptose 7-phosphate. It participates in carbohydrate biosynthesis; D-glycero-D-manno-heptose 7-phosphate biosynthesis; D-glycero-alpha-D-manno-heptose 7-phosphate and D-glycero-beta-D-manno-heptose 7-phosphate from sedoheptulose 7-phosphate: step 1/1. Its function is as follows. Catalyzes the isomerization of sedoheptulose 7-phosphate in D-glycero-D-manno-heptose 7-phosphate. The protein is Phosphoheptose isomerase of Buchnera aphidicola subsp. Acyrthosiphon pisum (strain 5A).